A 582-amino-acid chain; its full sequence is Semenogelin-2 (582 aa).

An N-terminal signal peptide occupies residues 1-23 (MKSIILFVLSLLLILEKQAAVMG). Disordered regions lie at residues 25–62 (KGGS…SKGS), 131–156 (KGGQ…KGIF), 173–192 (KEQA…GSQS), 272–477 (NLNQ…EQRQ), and 502–554 (VEGK…SGAH). A compositionally biased stretch (basic and acidic residues) spans 50-59 (GQKDKQHTES). Polar residues-rich tracts occupy residues 137-151 (HGTQ…NSPS) and 174-192 (EQAS…GSQS). Residues 292–310 (RTEERQLNHGEKSVQKDVS) are compositionally biased toward basic and acidic residues. Polar residues predominate over residues 325–335 (KSQNQVTIPSQ). The span at 336–345 (DQEHGHKENK) shows a compositional bias: basic and acidic residues. Over residues 385-395 (KSQNQVTIPSQ) the composition is skewed to polar residues. Basic and acidic residues predominate over residues 396–405 (DQEHGHKENK). Over residues 445 to 455 (KSQNQVTIPSQ) the composition is skewed to polar residues. The span at 456–465 (DQEHGHKENK) shows a compositional bias: basic and acidic residues. Polar residues-rich tracts occupy residues 466–477 (ISYQSSSTEQRQ) and 506–529 (SQIQ…NSGK). Positions 537 to 546 (LLSHEQEGRY) are enriched in basic and acidic residues.

This sequence belongs to the semenogelin family. In terms of assembly, interacts with SERPINA5.

It is found in the secreted. Participates in the formation of a gel matrix (sperm coagulum) entrapping the accessory gland secretions and ejaculated spermatozoa. In Macaca nemestrina (Pig-tailed macaque), this protein is Semenogelin-2 (SEMG2).